The primary structure comprises 355 residues: tRNA-specific 2-thiouridylase MnmA 1 (355 aa).

6-13 (LLSGGVDS) provides a ligand contact to ATP. The interval 92 to 94 (NPD) is interaction with target base in tRNA. Cys-97 functions as the Nucleophile in the catalytic mechanism. Cysteines 97 and 192 form a disulfide. Gly-120 is a binding site for ATP. Positions 142-144 (KDQ) are interaction with tRNA. Residue Cys-192 is the Cysteine persulfide intermediate of the active site.

This sequence belongs to the MnmA/TRMU family.

Its subcellular location is the cytoplasm. It catalyses the reaction S-sulfanyl-L-cysteinyl-[protein] + uridine(34) in tRNA + AH2 + ATP = 2-thiouridine(34) in tRNA + L-cysteinyl-[protein] + A + AMP + diphosphate + H(+). Its function is as follows. Catalyzes the 2-thiolation of uridine at the wobble position (U34) of tRNA, leading to the formation of s(2)U34. This is tRNA-specific 2-thiouridylase MnmA 1 from Bacteroides thetaiotaomicron (strain ATCC 29148 / DSM 2079 / JCM 5827 / CCUG 10774 / NCTC 10582 / VPI-5482 / E50).